We begin with the raw amino-acid sequence, 469 residues long: 23S rRNA (uracil(1939)-C(5))-methyltransferase RlmD (469 aa).

Residues 11–69 (PKTSNQRLTVTVDKLDMNGVGVARWQNKPIFIAGVLPDEIVDVKVIEQKSKYARAKLIS) enclose the TRAM domain. Residues cysteine 82, cysteine 88, cysteine 91, and cysteine 178 each coordinate [4Fe-4S] cluster. Glutamine 300, phenylalanine 329, asparagine 334, glutamate 350, aspartate 377, and aspartate 399 together coordinate S-adenosyl-L-methionine. Catalysis depends on cysteine 425, which acts as the Nucleophile.

Belongs to the class I-like SAM-binding methyltransferase superfamily. RNA M5U methyltransferase family. RlmD subfamily.

It catalyses the reaction uridine(1939) in 23S rRNA + S-adenosyl-L-methionine = 5-methyluridine(1939) in 23S rRNA + S-adenosyl-L-homocysteine + H(+). Its function is as follows. Catalyzes the formation of 5-methyl-uridine at position 1939 (m5U1939) in 23S rRNA. The sequence is that of 23S rRNA (uracil(1939)-C(5))-methyltransferase RlmD from Colwellia psychrerythraea (strain 34H / ATCC BAA-681) (Vibrio psychroerythus).